The primary structure comprises 373 residues: Probable tRNA sulfurtransferase (373 aa).

Residues 54–158 form the THUMP domain; sequence NKNIEELSKV…NDVAYFYHKI (105 aa). Residues 176–177, 201–202, Lys-256, Gly-278, and Gln-287 each bind ATP; these read LF and NF.

It belongs to the ThiI family.

The protein localises to the cytoplasm. It catalyses the reaction [ThiI sulfur-carrier protein]-S-sulfanyl-L-cysteine + a uridine in tRNA + 2 reduced [2Fe-2S]-[ferredoxin] + ATP + H(+) = [ThiI sulfur-carrier protein]-L-cysteine + a 4-thiouridine in tRNA + 2 oxidized [2Fe-2S]-[ferredoxin] + AMP + diphosphate. It carries out the reaction [ThiS sulfur-carrier protein]-C-terminal Gly-Gly-AMP + S-sulfanyl-L-cysteinyl-[cysteine desulfurase] + AH2 = [ThiS sulfur-carrier protein]-C-terminal-Gly-aminoethanethioate + L-cysteinyl-[cysteine desulfurase] + A + AMP + 2 H(+). Its pathway is cofactor biosynthesis; thiamine diphosphate biosynthesis. Its function is as follows. Catalyzes the ATP-dependent transfer of a sulfur to tRNA to produce 4-thiouridine in position 8 of tRNAs, which functions as a near-UV photosensor. Also catalyzes the transfer of sulfur to the sulfur carrier protein ThiS, forming ThiS-thiocarboxylate. This is a step in the synthesis of thiazole, in the thiamine biosynthesis pathway. The sulfur is donated as persulfide by IscS. In Saccharolobus islandicus (strain M.16.27) (Sulfolobus islandicus), this protein is Probable tRNA sulfurtransferase.